The chain runs to 184 residues: Gremlin-1 (184 aa).

The N-terminal stretch at 1–24 (MNRTAYTVGALLLLLGTLLPTAEG) is a signal peptide. The disordered stretch occupies residues 23–77 (EGKKKGSQGAIPPPDKAQHNDSEQTQSPPQPGSRTRGRGQGRGTAMPGEEVLESS). The N-linked (GlcNAc...) asparagine glycan is linked to Asn42. Disulfide bonds link Cys94–Cys144, Cys108–Cys158, Cys118–Cys176, and Cys122–Cys178. The CTCK domain maps to 94–184 (CKTQPLKQTI…QCRCISIDLD (91 aa)).

Belongs to the DAN family. As to quaternary structure, homodimer; can also form homooligomers. Interacts with BMP2; can form higher oligomers with BMP2. Interacts with SLIT1 and SLIT2 in a glycosylation-dependent manner. As to expression, highly expressed in spleen and to a lesser extent in lung, skeletal muscle and kidney. Expressed only in non-transformed cells or primary fibroblasts in culture but not in established transformed or tumor derived cell lines. Broadly expressed in limb bud mesenchyme but restricted to the distal limb bud mesenchyme and concentrated posteriorly. Expressed in ovary especially in granulosa cells of follicles of type 4.

The protein resides in the secreted. In terms of biological role, cytokine that may play an important role during carcinogenesis and metanephric kidney organogenesis, as BMP a antagonist required for early limb outgrowth and patterning in maintaining the FGF4-SHH feedback loop. Down-regulates the BMP4 signaling in a dose-dependent manner. Antagonist of BMP2; inhibits BMP2-mediated differentiation of osteoblasts (in vitro). Acts as inhibitor of monocyte chemotaxis. The sequence is that of Gremlin-1 (Grem1) from Mus musculus (Mouse).